Here is a 323-residue protein sequence, read N- to C-terminus: Probable cell division protein WhiA (323 aa).

Positions threonine 279 to alanine 313 form a DNA-binding region, H-T-H motif.

It belongs to the WhiA family.

In terms of biological role, involved in cell division and chromosome segregation. The chain is Probable cell division protein WhiA from Anoxybacillus flavithermus (strain DSM 21510 / WK1).